Reading from the N-terminus, the 110-residue chain is MEIEKTNRMNALFEFYAALLTDKQMNYIELYYADDYSLAEIAEEFGVSRQAVYDNIKRTEKILEDYEMKLHMYSDYIVRSQIFDDIMEKYADDSYLQEQIAILSSIDNRD.

The protein belongs to the UPF0122 family.

Its function is as follows. Might take part in the signal recognition particle (SRP) pathway. This is inferred from the conservation of its genetic proximity to ftsY/ffh. May be a regulatory protein. The chain is UPF0122 protein STER_0914 from Streptococcus thermophilus (strain ATCC BAA-491 / LMD-9).